The sequence spans 933 residues: Isoleucine--tRNA ligase (933 aa).

Positions 57 to 67 (PYANGNIHVGH) match the 'HIGH' region motif. Glutamate 554 serves as a coordination point for L-isoleucyl-5'-AMP. The 'KMSKS' region motif lies at 595–599 (KMSKS). Residue lysine 598 coordinates ATP.

Belongs to the class-I aminoacyl-tRNA synthetase family. IleS type 1 subfamily. In terms of assembly, monomer.

It is found in the cytoplasm. The catalysed reaction is tRNA(Ile) + L-isoleucine + ATP = L-isoleucyl-tRNA(Ile) + AMP + diphosphate. Functionally, catalyzes the attachment of isoleucine to tRNA(Ile). As IleRS can inadvertently accommodate and process structurally similar amino acids such as valine, to avoid such errors it has two additional distinct tRNA(Ile)-dependent editing activities. One activity is designated as 'pretransfer' editing and involves the hydrolysis of activated Val-AMP. The other activity is designated 'posttransfer' editing and involves deacylation of mischarged Val-tRNA(Ile). This chain is Isoleucine--tRNA ligase, found in Streptococcus pyogenes serotype M3 (strain ATCC BAA-595 / MGAS315).